Here is a 558-residue protein sequence, read N- to C-terminus: Arginine--tRNA ligase (558 aa).

A 'HIGH' region motif is present at residues 119-129 (ANPNGPLHVGH).

The protein belongs to the class-I aminoacyl-tRNA synthetase family.

It is found in the cytoplasm. The catalysed reaction is tRNA(Arg) + L-arginine + ATP = L-arginyl-tRNA(Arg) + AMP + diphosphate. This is Arginine--tRNA ligase from Methanoregula boonei (strain DSM 21154 / JCM 14090 / 6A8).